Here is a 343-residue protein sequence, read N- to C-terminus: Biotin synthase (343 aa).

The region spanning 64 to 291 (NTVQLSTLLS…RAMVRLSAGR (228 aa)) is the Radical SAM core domain. Residues Cys79, Cys83, and Cys86 each coordinate [4Fe-4S] cluster. Positions 123, 154, 214, and 286 each coordinate [2Fe-2S] cluster.

This sequence belongs to the radical SAM superfamily. Biotin synthase family. As to quaternary structure, homodimer. [4Fe-4S] cluster is required as a cofactor. The cofactor is [2Fe-2S] cluster.

The enzyme catalyses (4R,5S)-dethiobiotin + (sulfur carrier)-SH + 2 reduced [2Fe-2S]-[ferredoxin] + 2 S-adenosyl-L-methionine = (sulfur carrier)-H + biotin + 2 5'-deoxyadenosine + 2 L-methionine + 2 oxidized [2Fe-2S]-[ferredoxin]. The protein operates within cofactor biosynthesis; biotin biosynthesis; biotin from 7,8-diaminononanoate: step 2/2. Its function is as follows. Catalyzes the conversion of dethiobiotin (DTB) to biotin by the insertion of a sulfur atom into dethiobiotin via a radical-based mechanism. This chain is Biotin synthase, found in Cupriavidus necator (strain ATCC 17699 / DSM 428 / KCTC 22496 / NCIMB 10442 / H16 / Stanier 337) (Ralstonia eutropha).